Here is a 139-residue protein sequence, read N- to C-terminus: Holo-[acyl-carrier-protein] synthase (139 aa).

The Mg(2+) site is built by aspartate 8 and glutamate 61.

The protein belongs to the P-Pant transferase superfamily. AcpS family. Mg(2+) is required as a cofactor.

It is found in the cytoplasm. The enzyme catalyses apo-[ACP] + CoA = holo-[ACP] + adenosine 3',5'-bisphosphate + H(+). Functionally, transfers the 4'-phosphopantetheine moiety from coenzyme A to a Ser of acyl-carrier-protein. This is Holo-[acyl-carrier-protein] synthase from Nitrobacter winogradskyi (strain ATCC 25391 / DSM 10237 / CIP 104748 / NCIMB 11846 / Nb-255).